The chain runs to 194 residues: Putative manganese efflux pump MntP (194 aa).

6 helical membrane-spanning segments follow: residues 6 to 26 (LILV…GLAL), 35 to 55 (WLFA…GLYL), 66 to 86 (VAAI…LWEA), 109 to 129 (GVLG…LDAL), 142 to 162 (VPLT…LGLL), and 174 to 194 (RAEL…LVGV).

Belongs to the MntP (TC 9.B.29) family.

The protein resides in the cell membrane. Its function is as follows. Probably functions as a manganese efflux pump. The protein is Putative manganese efflux pump MntP of Moorella thermoacetica (strain ATCC 39073 / JCM 9320).